Consider the following 245-residue polypeptide: Small ribosomal subunit protein uS2 (245 aa).

Belongs to the universal ribosomal protein uS2 family.

This is Small ribosomal subunit protein uS2 from Pseudomonas entomophila (strain L48).